The sequence spans 1616 residues: MAYTQTATSSALLETVRGNNTLVNDLAKRRLYDTAVDEFNARDRRPKVNFSKVVSEEQTLIATKAYPEFQITFYNTQNAVHSLAGGLRSLELEYLMMQIPYGSLTYDIGGNFASHLFKGRAYVHCCMPNLDVRDIMRHEGQKDSIELYLSRLERGNKHVPNFQKEAFERYAEMPNEVVCHDTFQTCRHSQECYTGRVYAIALHSIYDIPADEFGAALLRKNVHVCYAAFHFSENLLLEDSHVNLDEINACFQRDGDRLTFSFASESTLNHSHSYSNILKYVCKTYFPASNREVYMKEFLVTRVNTWFCKFSRIDTFLFYKGVAHKGVDSEQFYKAMEDAWHYKKTLAMCNSERILLEDSSSVNYWFPKMRDMVIVPLFDISLETSKRTRKEVLVSKDFVYTVLNHIRTYQAKALTYSNVLSFVESIRSRVIINGVTARSEWDVDKSLLQSLSMTFFLHTKLAVLKDDLLISKFALGPKTVSQHVWDEISLAFGNAFPSIKERLINRKLIKITENALEIRVPDLYVTFHDRLVSEYKMSVDMPVLDIRKKMEETEEMYNALSELSVLKNSDKFDVDVFSQMCQSLEVDPMTAAKVIVAVMSNESGLTLTFEQPTEANVALALQDSEKASDGALVVTSRDVEEPSIRGSMARGELQLAGLSGDVPESSYTRSEEIESLEQFHMATASSLIHKQMCSIVYTGPLKVQQMKNFIDSLVASLSAAVSNLVKILKDTAAIDLETRQKFGVLDVASKRWLVKPSAKNHAWGVVETHARKYHVALLEHDEFGIITCDNWRRVAVSSESVVYSDMAKLRTLRRLLKDGEPHVSSAKVVLVDGVPGCGKTKEILSRVNFEEDLILVPGRQAAEMIRRRANASGIIVATKDNVRTVDSFLMNYGKGARCQFKRLFIDEGLMLHTGCVNFLVEMSLCDIAYVYGDTQQIPYINRVTGFPYPAHFAKLEVDEVETRRTTLRCPADVTHFLNQRYEGHVMCTSSEKKSVSQEMVSGAASINPVSKPLKGKILTFTQSDKEALLSRGYADVHTVHEVQGETYADVSLVRLTPTPVSIIARDSPHVLVSLSRHTKSLKYYTVVMDPLVSIIRDLERVSSYLLDMYKVDAGTQXQLQVDSVFKNFNLFVAAPKTGDISDMQFYYDKCLPGNSTLLNNYDAVTMKLTDISLNVKDCILDMSKSVAAPKDVKPTLIPMVRTAAEMPRQTGLLENLVAMIKRNFNSPELSGVVDIENTASLVVDKFFDSYLLKEKRKPNKNFSLFSRESLNRWIAKQEQVTIGQLADFDFVDLPAVDQYRHMIKAQPKQKLDLSIQTEYPALQTIVYHSKKINAIFGPLFSELTRQLLDSIDSSRFLFFTRKTPAQIEDFFGDLDSHVPMDVLELDVSKYDKSQNEFHCAVEYEIWRRLGLEDFLAEVWKQGHRKTTLKDYTAGIKTCLWYQRKSGDVTTFIGNTVIIASCLASMLPMEKLIKGAFCGDDSLLYFPKGCEYPDIQQAANLMWNFEAKLFKKQYGYFCGRYVIHHDRGCIVYYDPLKLISKLGAKHIKDWDHLEEFRRSLCDVAESLNNCAYYTQLDDAVGEVHKTAPPGSFVYKSLVKYLSDKVLFRSLFLDGSSC.

The segment at 50–458 (FSKVVSEEQT…QSLSMTFFLH (409 aa)) is methyltransferase. In terms of domain architecture, Alphavirus-like MT spans 72-281 (TFYNTQNAVH…HSYSNILKYV (210 aa)). A (+)RNA virus helicase ATP-binding domain is found at 801-963 (VVYSDMAKLR…KLEVDEVETR (163 aa)). Residues 830–1085 (LVDGVPGCGK…RHTKSLKYYT (256 aa)) are helicase. An ATP-binding site is contributed by 833-840 (GVPGCGKT). A (+)RNA virus helicase C-terminal domain is found at 964–1116 (RTTLRCPADV…DMYKVDAGTQ (153 aa)). Residues 1380–1493 (MDVLELDVSK…YFPKGCEYPD (114 aa)) form the RdRp catalytic domain.

It belongs to the ssRNA positive-strand viruses RNA-directed RNA polymerase family. In terms of assembly, heterodimer of a large and a small subunit.

It catalyses the reaction RNA(n) + a ribonucleoside 5'-triphosphate = RNA(n+1) + diphosphate. The catalysed reaction is ATP + H2O = ADP + phosphate + H(+). Functionally, is an RNA-dependent RNA polymerase active in viral RNA replication. Is a methyltransferase active in RNA capping and an RNA helicase. Methyltransferase displays a cytoplasmic capping enzyme activity. This function is necessary since all viral RNAs are synthesized in the cytoplasm, and host capping enzymes are restricted to the nucleus. Helicase region probably exhibits NTPase and RNA unwinding activities (Potential). It also acts as a suppressor of RNA-mediated gene silencing, also known as post-transcriptional gene silencing (PTGS), a mechanism of plant viral defense that limits the accumulation of viral RNAs. May mediate silencing suppression through either inhibition of HEN1-mediated siRNA or siRNA demethylation. This chain is Replicase large subunit, found in Antirrhinum majus (Garden snapdragon).